A 316-amino-acid polypeptide reads, in one-letter code: Probable cell division protein WhiA (316 aa).

The segment at residues 275 to 309 (TLKELGEMVSSGKISKSGINHRLRKLDEIAEQLRS) is a DNA-binding region (H-T-H motif).

Belongs to the WhiA family.

Its function is as follows. Involved in cell division and chromosome segregation. The protein is Probable cell division protein WhiA of Bacillus licheniformis (strain ATCC 14580 / DSM 13 / JCM 2505 / CCUG 7422 / NBRC 12200 / NCIMB 9375 / NCTC 10341 / NRRL NRS-1264 / Gibson 46).